The sequence spans 721 residues: S-adenosyl-L-methionine-dependent tRNA 4-demethylwyosine synthase TYW1 (721 aa).

The Flavodoxin-like domain maps to 71 to 229; it reads VKIFYGSQTG…DFTAWKTKFI (159 aa). FMN contacts are provided by residues 77–81 and 168–200; these read SQTGT and VFGL…QRVL. Disordered regions lie at residues 242–291 and 305–339; these read ACGG…ELGT and DLGN…TEDG. A compositionally biased stretch (basic and acidic residues) spans 250 to 274; the sequence is GKCESAQHGPGEARPHPQGELHPGD. Acidic residues predominate over residues 275-290; the sequence is AEEEEPCESSSEDELG. Basic and acidic residues predominate over residues 313-325; that stretch reads VKREKREKSHQDG. One can recognise a Radical SAM core domain in the interval 389–635; that stretch reads YGIESHRCME…LLPDYEVACE (247 aa). Residues Cys405, Cys409, and Cys412 each contribute to the [4Fe-4S] cluster site.

It belongs to the TYW1 family. Requires [4Fe-4S] cluster as cofactor.

It catalyses the reaction N(1)-methylguanosine(37) in tRNA(Phe) + pyruvate + S-adenosyl-L-methionine = 4-demethylwyosine(37) in tRNA(Phe) + 5'-deoxyadenosine + L-methionine + CO2 + H2O. The protein operates within tRNA modification; wybutosine-tRNA(Phe) biosynthesis. Probable component of the wybutosine biosynthesis pathway. Wybutosine is a hyper modified guanosine with a tricyclic base found at the 3'-position adjacent to the anticodon of eukaryotic phenylalanine tRNA. Catalyzes the condensation of N-methylguanine with 2 carbon atoms from pyruvate to form the tricyclic 4-demethylwyosine, an intermediate in wybutosine biosynthesis. The sequence is that of S-adenosyl-L-methionine-dependent tRNA 4-demethylwyosine synthase TYW1 (Tyw1) from Mus musculus (Mouse).